The sequence spans 470 residues: Glutathione reductase (470 aa).

Residues Ser16 and Gly17 each coordinate FAD. A glutathione-binding site is contributed by Ser16. A glutathione-binding site is contributed by Arg23. FAD contacts are provided by Glu36, Thr43, Cys44, and Lys52. Cys44 and Cys49 form a disulfide bridge. Tyr104 provides a ligand contact to glutathione. Ala120 is an FAD binding site. Positions 190, 193, 196, 213, and 219 each coordinate NADP(+). Glutathione is bound at residue Thr228. Gly280 contributes to the NADP(+) binding site. Asp321 is an FAD binding site. Glu327 contributes to the NADP(+) binding site. Thr329 contributes to the FAD binding site. Arg337 is a binding site for glutathione. Ala362 serves as a coordination point for NADP(+). Lys412 contacts glutathione. His459 contributes to the FAD binding site. His459 functions as the Proton acceptor in the catalytic mechanism.

Belongs to the class-I pyridine nucleotide-disulfide oxidoreductase family. Homodimer. FAD is required as a cofactor.

It localises to the cytoplasm. The protein resides in the mitochondrion. It carries out the reaction 2 glutathione + NADP(+) = glutathione disulfide + NADPH + H(+). Functionally, catalyzes the reduction of glutathione disulfide (GSSG) to reduced glutathione (GSH). Constitutes the major mechanism to maintain a high GSH:GSSG ratio in the cytosol. This Yarrowia lipolytica (strain CLIB 122 / E 150) (Yeast) protein is Glutathione reductase (GLR1).